Reading from the N-terminus, the 332-residue chain is 4-hydroxy-3-methylbut-2-enyl diphosphate reductase (332 aa).

Cys34 contacts [4Fe-4S] cluster. Residues His63 and His96 each contribute to the (2E)-4-hydroxy-3-methylbut-2-enyl diphosphate site. Positions 63 and 96 each coordinate dimethylallyl diphosphate. Residues His63 and His96 each coordinate isopentenyl diphosphate. [4Fe-4S] cluster is bound at residue Cys118. His146 contributes to the (2E)-4-hydroxy-3-methylbut-2-enyl diphosphate binding site. His146 is a dimethylallyl diphosphate binding site. Residue His146 participates in isopentenyl diphosphate binding. Glu148 functions as the Proton donor in the catalytic mechanism. Thr186 serves as a coordination point for (2E)-4-hydroxy-3-methylbut-2-enyl diphosphate. Residue Cys216 coordinates [4Fe-4S] cluster. (2E)-4-hydroxy-3-methylbut-2-enyl diphosphate is bound by residues Ser244, Ser245, Asn246, and Ser289. The dimethylallyl diphosphate site is built by Ser244, Ser245, Asn246, and Ser289. Positions 244, 245, 246, and 289 each coordinate isopentenyl diphosphate.

It belongs to the IspH family. Requires [4Fe-4S] cluster as cofactor.

It carries out the reaction isopentenyl diphosphate + 2 oxidized [2Fe-2S]-[ferredoxin] + H2O = (2E)-4-hydroxy-3-methylbut-2-enyl diphosphate + 2 reduced [2Fe-2S]-[ferredoxin] + 2 H(+). The catalysed reaction is dimethylallyl diphosphate + 2 oxidized [2Fe-2S]-[ferredoxin] + H2O = (2E)-4-hydroxy-3-methylbut-2-enyl diphosphate + 2 reduced [2Fe-2S]-[ferredoxin] + 2 H(+). The protein operates within isoprenoid biosynthesis; dimethylallyl diphosphate biosynthesis; dimethylallyl diphosphate from (2E)-4-hydroxy-3-methylbutenyl diphosphate: step 1/1. It functions in the pathway isoprenoid biosynthesis; isopentenyl diphosphate biosynthesis via DXP pathway; isopentenyl diphosphate from 1-deoxy-D-xylulose 5-phosphate: step 6/6. Functionally, catalyzes the conversion of 1-hydroxy-2-methyl-2-(E)-butenyl 4-diphosphate (HMBPP) into a mixture of isopentenyl diphosphate (IPP) and dimethylallyl diphosphate (DMAPP). Acts in the terminal step of the DOXP/MEP pathway for isoprenoid precursor biosynthesis. The chain is 4-hydroxy-3-methylbut-2-enyl diphosphate reductase from Mycobacterium ulcerans (strain Agy99).